A 451-amino-acid chain; its full sequence is 3-phosphoshikimate 1-carboxyvinyltransferase (451 aa).

Lys-28, Ser-29, and Arg-33 together coordinate 3-phosphoshikimate. Lys-28 contacts phosphoenolpyruvate. The phosphoenolpyruvate site is built by Gly-105 and Arg-133. Positions 178, 180, 331, and 358 each coordinate 3-phosphoshikimate. Gln-180 is a phosphoenolpyruvate binding site. Residue Asp-331 is the Proton acceptor of the active site. Residues Arg-362 and Arg-406 each coordinate phosphoenolpyruvate.

The protein belongs to the EPSP synthase family. In terms of assembly, monomer.

It is found in the cytoplasm. It carries out the reaction 3-phosphoshikimate + phosphoenolpyruvate = 5-O-(1-carboxyvinyl)-3-phosphoshikimate + phosphate. Its pathway is metabolic intermediate biosynthesis; chorismate biosynthesis; chorismate from D-erythrose 4-phosphate and phosphoenolpyruvate: step 6/7. Functionally, catalyzes the transfer of the enolpyruvyl moiety of phosphoenolpyruvate (PEP) to the 5-hydroxyl of shikimate-3-phosphate (S3P) to produce enolpyruvyl shikimate-3-phosphate and inorganic phosphate. The polypeptide is 3-phosphoshikimate 1-carboxyvinyltransferase (Rhodospirillum rubrum (strain ATCC 11170 / ATH 1.1.1 / DSM 467 / LMG 4362 / NCIMB 8255 / S1)).